Here is a 284-residue protein sequence, read N- to C-terminus: MYVVSTKQMLNNAQRGGYAVPAFNIHNLETMQVVVETAASMHAPVIIAGTPGTFTHAGTENLMALVSAMAKQYHHPLAIHLDHHTKFDDIAQKVRSGVRSVMIDASHLPFAQNISRVKEVVDFCHRFDVSVEAELGQLGGQEDDVQVNEADAFYTNPAQAREFAEATGIDSLAVAIGTAHGMYASAPALDFSRLENIRQWVNLPLVLHGASGLSTKDIQQTIKLGICKINVATELKNAFSQALKNYLTEHPEATDPRDYLQSAKSAMRDVVSKVIADCGCEGRA.

The active-site Proton donor is D82. The Zn(2+) site is built by H83 and H180. G181 is a dihydroxyacetone phosphate binding site. H208 is a binding site for Zn(2+). Dihydroxyacetone phosphate-binding positions include 209 to 211 and 230 to 233; these read GAS and NVAT.

It belongs to the class II fructose-bisphosphate aldolase family. TagBP aldolase GatY subfamily. As to quaternary structure, forms a complex with GatZ. It depends on Zn(2+) as a cofactor.

It carries out the reaction D-tagatofuranose 1,6-bisphosphate = D-glyceraldehyde 3-phosphate + dihydroxyacetone phosphate. It participates in carbohydrate metabolism; D-tagatose 6-phosphate degradation; D-glyceraldehyde 3-phosphate and glycerone phosphate from D-tagatose 6-phosphate: step 2/2. Its function is as follows. Catalytic subunit of the tagatose-1,6-bisphosphate aldolase GatYZ, which catalyzes the reversible aldol condensation of dihydroxyacetone phosphate (DHAP or glycerone-phosphate) with glyceraldehyde 3-phosphate (G3P) to produce tagatose 1,6-bisphosphate (TBP). Requires GatZ subunit for full activity and stability. Is involved in the catabolism of galactitol. This Escherichia coli O7:K1 (strain IAI39 / ExPEC) protein is D-tagatose-1,6-bisphosphate aldolase subunit GatY.